We begin with the raw amino-acid sequence, 667 residues long: Gamma-tubulin complex component 4 (667 aa).

The segment at 425-445 (HKADATQAREGPSRETSPREA) is disordered.

Belongs to the TUBGCP family. As to quaternary structure, component of the gamma-tubulin ring complex (gTuRC) consisting of TUBGCP2, TUBGCP3, TUBGCP4, TUBGCP5 and TUBGCP6 and gamma-tubulin TUBG1 or TUBG2. TUBGCP2, TUBGCP3, TUBGCP4, TUBGCP5 and TUBGCP6 assemble in a 5:5:2:1:1 stoichiometry; each is associated with a gamma-tubulin, thereby arranging 14 gamma-tubulins in a helical manner. Gamma-tubulin at the first position is blocked by TUBGCP3 at the last position, allowing 13 protafilaments to grow into a microtubule. The gTuRC (via TUBGCP3 and TUBGCP6) interacts with ACTB and MZT1; the interactions form a luminal bridge that stabilizes the initial structure during complex assembly. The gTuRC (via TUBGCP2) interacts with MZT2A/MZT2B and CDK5RAP2 (via CM1 motif); the interactions play a role in gTuRC activation. Interacts with NINL. Interacts with ATF5; the ATF5:PCNT:polyglutamylated tubulin (PGT) tripartite unites the mother centriole and the pericentriolar material (PCM) in the centrosome. In terms of tissue distribution, ubiquitously expressed.

Its subcellular location is the cytoplasm. The protein localises to the cytoskeleton. The protein resides in the microtubule organizing center. It is found in the centrosome. Component of the gamma-tubulin ring complex (gTuRC) which mediates microtubule nucleation. The gTuRC regulates the minus-end nucleation of alpha-beta tubulin heterodimers that grow into microtubule protafilaments, a critical step in centrosome duplication and spindle formation. In Homo sapiens (Human), this protein is Gamma-tubulin complex component 4 (TUBGCP4).